Here is a 180-residue protein sequence, read N- to C-terminus: UPF0340 protein YwlG (180 aa).

This sequence belongs to the UPF0340 family.

The polypeptide is UPF0340 protein YwlG (ywlG) (Bacillus subtilis (strain 168)).